Here is a 442-residue protein sequence, read N- to C-terminus: UDP-glucosyltransferase 29 (442 aa).

Catalysis depends on His-20, which acts as the Proton acceptor. His-20 lines the an anthocyanidin pocket. Catalysis depends on Asp-116, which acts as the Charge relay. 9 residues coordinate UDP-alpha-D-glucose: Thr-138, Ala-318, Gln-320, His-335, Trp-338, Ser-340, Glu-343, Asp-359, and Gln-360.

The protein belongs to the UDP-glycosyltransferase family. As to expression, expressed at higher levels in roots than in leaves.

The catalysed reaction is (20S)-ginsenoside F2 + UDP-alpha-D-glucose = (20S)-ginsenoside Rd + UDP + H(+). The enzyme catalyses (20S)-ginsenoside Rh2 + UDP-alpha-D-glucose = (20S)-ginsenoside Rg3 + UDP + H(+). The protein operates within secondary metabolite biosynthesis; terpenoid biosynthesis. In terms of biological role, component of the dammarane-type triterpene saponins (e.g. PPD-type ginsenosides or panaxosides) biosynthetic pathway. Glycosyltransferase that catalyzes the conversion of ginsenoside Rh2 to ginsenoside Rg3. Triggers the biosynthesis of ginsenoside Rd from ginsenoside F2. The chain is UDP-glucosyltransferase 29 from Panax ginseng (Korean ginseng).